The primary structure comprises 501 residues: Ribose import ATP-binding protein RbsA (501 aa).

ABC transporter domains are found at residues 5 to 241 (LELK…VGRK) and 249 to 495 (LNLP…VGKQ). 37–44 (GENGAGKS) contributes to the ATP binding site.

The protein belongs to the ABC transporter superfamily. Ribose importer (TC 3.A.1.2.1) family. As to quaternary structure, the complex is composed of an ATP-binding protein (RbsA), two transmembrane proteins (RbsC) and a solute-binding protein (RbsB).

It localises to the cell inner membrane. The enzyme catalyses D-ribose(out) + ATP + H2O = D-ribose(in) + ADP + phosphate + H(+). Part of the ABC transporter complex RbsABC involved in ribose import. Responsible for energy coupling to the transport system. The polypeptide is Ribose import ATP-binding protein RbsA (Photorhabdus laumondii subsp. laumondii (strain DSM 15139 / CIP 105565 / TT01) (Photorhabdus luminescens subsp. laumondii)).